Reading from the N-terminus, the 288-residue chain is ATP synthase gamma chain (288 aa).

Belongs to the ATPase gamma chain family. F-type ATPases have 2 components, CF(1) - the catalytic core - and CF(0) - the membrane proton channel. CF(1) has five subunits: alpha(3), beta(3), gamma(1), delta(1), epsilon(1). CF(0) has three main subunits: a, b and c.

The protein localises to the cell membrane. Functionally, produces ATP from ADP in the presence of a proton gradient across the membrane. The gamma chain is believed to be important in regulating ATPase activity and the flow of protons through the CF(0) complex. This Staphylococcus haemolyticus (strain JCSC1435) protein is ATP synthase gamma chain.